A 234-amino-acid polypeptide reads, in one-letter code: Triosephosphate isomerase (234 aa).

Residue 8–10 (NFK) participates in substrate binding. Residue histidine 90 is the Electrophile of the active site. The active-site Proton acceptor is the glutamate 159. Positions 165 and 197 each coordinate substrate.

The protein belongs to the triosephosphate isomerase family. Homodimer.

Its subcellular location is the cytoplasm. The enzyme catalyses D-glyceraldehyde 3-phosphate = dihydroxyacetone phosphate. The protein operates within carbohydrate biosynthesis; gluconeogenesis. It functions in the pathway carbohydrate degradation; glycolysis; D-glyceraldehyde 3-phosphate from glycerone phosphate: step 1/1. In terms of biological role, involved in the gluconeogenesis. Catalyzes stereospecifically the conversion of dihydroxyacetone phosphate (DHAP) to D-glyceraldehyde-3-phosphate (G3P). The protein is Triosephosphate isomerase of Helicobacter pylori (strain Shi470).